The following is a 70-amino-acid chain: Conotoxin Lt3.4 (70 aa).

An N-terminal signal peptide occupies residues 1-24; sequence MLKMGVLLFTFLVLFPLAMFQLDA. A propeptide spanning residues 25–54 is cleaved from the precursor; sequence DQPVERYAENKQDLNRDERMKIMLSALRQR. Position 55 is a pyrrolidone carboxylic acid (Q55). Disulfide bonds link C56-C68, C57-C66, and C62-C69.

The protein belongs to the conotoxin M superfamily. Expressed by the venom duct.

The protein resides in the secreted. The protein is Conotoxin Lt3.4 of Conus litteratus (Lettered cone).